Here is a 552-residue protein sequence, read N- to C-terminus: CTP synthase (552 aa).

Positions 1-270 are amidoligase domain; the sequence is MTKYVFVTGG…DRIICEELKL (270 aa). CTP is bound at residue S13. S13 contributes to the UTP binding site. ATP is bound by residues 14–19 and D71; that span reads SLGKGI. Mg(2+) contacts are provided by D71 and E144. CTP contacts are provided by residues 151 to 153, 191 to 196, and K227; these read DIE and KTKPTQ. UTP contacts are provided by residues 191–196 and K227; that span reads KTKPTQ. Residues 295 to 547 form the Glutamine amidotransferase type-1 domain; it reads TIGMVGKYVD…VEAALANKQA (253 aa). G356 provides a ligand contact to L-glutamine. Residue C383 is the Nucleophile; for glutamine hydrolysis of the active site. L-glutamine contacts are provided by residues 384-387, E407, and R473; that span reads LGMQ. Residues H520 and E522 contribute to the active site.

This sequence belongs to the CTP synthase family. As to quaternary structure, homotetramer.

It catalyses the reaction UTP + L-glutamine + ATP + H2O = CTP + L-glutamate + ADP + phosphate + 2 H(+). The enzyme catalyses L-glutamine + H2O = L-glutamate + NH4(+). The catalysed reaction is UTP + NH4(+) + ATP = CTP + ADP + phosphate + 2 H(+). Its pathway is pyrimidine metabolism; CTP biosynthesis via de novo pathway; CTP from UDP: step 2/2. Its activity is regulated as follows. Allosterically activated by GTP, when glutamine is the substrate; GTP has no effect on the reaction when ammonia is the substrate. The allosteric effector GTP functions by stabilizing the protein conformation that binds the tetrahedral intermediate(s) formed during glutamine hydrolysis. Inhibited by the product CTP, via allosteric rather than competitive inhibition. Catalyzes the ATP-dependent amination of UTP to CTP with either L-glutamine or ammonia as the source of nitrogen. Regulates intracellular CTP levels through interactions with the four ribonucleotide triphosphates. This Burkholderia cenocepacia (strain ATCC BAA-245 / DSM 16553 / LMG 16656 / NCTC 13227 / J2315 / CF5610) (Burkholderia cepacia (strain J2315)) protein is CTP synthase.